The primary structure comprises 156 residues: Small ribosomal subunit protein uS7 (156 aa).

This sequence belongs to the universal ribosomal protein uS7 family. Part of the 30S ribosomal subunit. Contacts proteins S9 and S11.

One of the primary rRNA binding proteins, it binds directly to 16S rRNA where it nucleates assembly of the head domain of the 30S subunit. Is located at the subunit interface close to the decoding center, probably blocks exit of the E-site tRNA. In Jannaschia sp. (strain CCS1), this protein is Small ribosomal subunit protein uS7.